Consider the following 1085-residue polypeptide: Solute carrier family 12 member 4 (1085 aa).

Topologically, residues 1-119 are cytoplasmic; it reads MPHFTVVPVD…RRAAKAPSMG (119 aa). Residues Ser-24, Ser-47, Ser-81, and Ser-88 each carry the phosphoserine modification. Residues 120 to 141 form a discontinuously helical membrane-spanning segment; that stretch reads TLMGVYLPCLQNIFGVILFLRL. Residues Asn-131 and Ile-132 each coordinate K(+). The Extracellular portion of the chain corresponds to 142-149; it reads TWMVGTAG. Residues 150–172 form a helical membrane-spanning segment; that stretch reads VLQALLIVLICCCCTLLTAISMS. The Cytoplasmic portion of the chain corresponds to 173–196; it reads AIATNGVVPAGGSYFMISRSLGPE. The chain crosses the membrane as a helical span at residues 197 to 225; the sequence is FGGAVGLCFYLGTTFAAAMYILGAIEILL. K(+) is bound at residue Tyr-216. Over 226–248 the chain is Extracellular; sequence TYIAPPAAIFYPSGTHDMSSATL. Transmembrane regions (helical) follow at residues 249–271 and 272–297; these read NNMR…VGVK and YVNK…GGIK. Residues 298-419 lie on the Extracellular side of the membrane; the sequence is SIFDPPVFPV…LYVVADIATS (122 aa). Residues Cys-308 and Cys-323 are joined by a disulfide bond. Asn-312, Asn-331, and Asn-347 each carry an N-linked (GlcNAc...) asparagine glycan. An intrachain disulfide couples Cys-343 to Cys-353. The chain crosses the membrane as a helical span at residues 420–440; sequence FTVLVGIFFPSVTGIMAGSNR. K(+)-binding residues include Pro-429 and Thr-432. The chloride site is built by Gly-433, Ile-434, and Met-435. The Cytoplasmic portion of the chain corresponds to 441–450; the sequence is SGDLRDAQKS. The helical transmembrane segment at 451–473 threads the bilayer; sequence IPVGTILAIVTTSLVYFSSVILF. The Extracellular portion of the chain corresponds to 474–504; it reads GACIEGVVLRDKYGDGVSRNLVVGTLAWPSP. Residues 505–531 traverse the membrane as a helical segment; the sequence is WVIVVGSFFSTCGAGLQSLTGAPRLLQ. Residues 532–554 are Cytoplasmic-facing; that stretch reads AIAKDNIIPFLRVFGHGKANGEP. Helical transmembrane passes span 555-575 and 576-598; these read TWAL…ASLD and MVAP…ACAV. Position 589 (Tyr-589) interacts with chloride. At 599–612 the chain is on the cytoplasmic side; it reads QTLLRTPNWRPRFK. 2 consecutive transmembrane segments (helical) span residues 613–635 and 636–651; these read YYHW…VSSW and YYAL…IYKY. Topologically, residues 652-1085 are cytoplasmic; that stretch reads IEYQGAEKEW…GGREVITIYS (434 aa). The segment at 665-681 is scissor helix; sequence IRGLSLSAARYALLRLE. ATP contacts are provided by Leu-697, Lys-699, Lys-707, Tyr-708, and Val-730. At Ser-734 the chain carries Phosphoserine. 3 residues coordinate ATP: Gly-794, Trp-795, and Tyr-797. Residues Ser-916 and Ser-967 each carry the phosphoserine modification. Residue Thr-983 is modified to Phosphothreonine. Ser-1050 carries the post-translational modification Phosphoserine.

Belongs to the SLC12A transporter family. K/Cl co-transporter subfamily. Homodimer; adopts a domain-swap conformation at the scissor helices connecting the transmembrane domain and C-terminal domain. Heterodimer with other K-Cl cotransporters. Phosphorylated, phosphorylation may regulate transporter activity. In terms of tissue distribution, detected in embryo, adult heart, erythrocytes, brain, kidney, stomach, ovary, testis and liver.

The protein resides in the cell membrane. The enzyme catalyses K(+)(in) + chloride(in) = K(+)(out) + chloride(out). Inhibited by WNK3. Mediates electroneutral potassium-chloride cotransport when activated by cell swelling. May contribute to cell volume homeostasis in single cells. May be involved in the regulation of basolateral Cl(-) exit in NaCl absorbing epithelia. This is Solute carrier family 12 member 4 (Slc12a4) from Mus musculus (Mouse).